Here is a 200-residue protein sequence, read N- to C-terminus: Ubiquitin-conjugating enzyme E2 K (200 aa).

Residue alanine 2 is modified to N-acetylalanine. A UBC core domain is found at 4-154 (IAVQRIKREF…ARLWAHVYAG (151 aa)). Lysine 14 is modified (N6-acetyllysine; alternate). Lysine 14 is covalently cross-linked (Glycyl lysine isopeptide (Lys-Gly) (interchain with G-Cter in SUMO); alternate). A Glycyl lysine isopeptide (Lys-Gly) (interchain with G-Cter in SUMO1); alternate cross-link involves residue lysine 14. The Glycyl thioester intermediate role is filled by cysteine 92. At serine 159 the chain carries Phosphoserine. One can recognise a UBA domain in the interval 160 to 200 (PEYTKKIENLCAMGFDRNAVIVALSSKSWDVETATELLLSN).

Belongs to the ubiquitin-conjugating enzyme family. As to quaternary structure, interacts with RNF138/NARF. Interacts with BRCA1. In terms of processing, sumoylation at Lys-14 impairs catalytic activity.

It is found in the cytoplasm. It carries out the reaction S-ubiquitinyl-[E1 ubiquitin-activating enzyme]-L-cysteine + [E2 ubiquitin-conjugating enzyme]-L-cysteine = [E1 ubiquitin-activating enzyme]-L-cysteine + S-ubiquitinyl-[E2 ubiquitin-conjugating enzyme]-L-cysteine.. The protein operates within protein modification; protein ubiquitination. Functionally, accepts ubiquitin from the E1 complex and catalyzes its covalent attachment to other proteins. In vitro, in the presence or in the absence of BRCA1-BARD1 E3 ubiquitin-protein ligase complex, catalyzes the synthesis of 'Lys-48'-linked polyubiquitin chains. Does not transfer ubiquitin directly to but elongates monoubiquitinated substrate protein. Mediates the selective degradation of short-lived and abnormal proteins, such as the endoplasmic reticulum-associated degradation (ERAD) of misfolded lumenal proteins. Ubiquitinates huntingtin. May mediate foam cell formation by the suppression of apoptosis of lipid-bearing macrophages through ubiquitination and subsequence degradation of p53/TP53. Proposed to be involved in ubiquitination and proteolytic processing of NF-kappa-B; in vitro supports ubiquitination of NFKB1. In Bos taurus (Bovine), this protein is Ubiquitin-conjugating enzyme E2 K (UBE2K).